Here is a 200-residue protein sequence, read N- to C-terminus: Probable GTP-binding protein EngB (200 aa).

The EngB-type G domain occupies 22 to 194; that stretch reads TLPEVAFVGR…WKEVLRLTLA (173 aa). GTP contacts are provided by residues 30-37, 57-61, 75-78, 142-145, and 173-175; these read GRSNVGKS, GRTQL, DLPG, TKCD, and FSA. Mg(2+) is bound by residues Ser-37 and Thr-59.

This sequence belongs to the TRAFAC class TrmE-Era-EngA-EngB-Septin-like GTPase superfamily. EngB GTPase family. Mg(2+) serves as cofactor.

Functionally, necessary for normal cell division and for the maintenance of normal septation. The polypeptide is Probable GTP-binding protein EngB (Pelobacter propionicus (strain DSM 2379 / NBRC 103807 / OttBd1)).